A 315-amino-acid polypeptide reads, in one-letter code: Acetyl-coenzyme A carboxylase carboxyl transferase subunit alpha (315 aa).

Residues 36 to 289 form the CoA carboxyltransferase C-terminal domain; it reads LGKKRLELME…RKAVAAELKV (254 aa).

It belongs to the AccA family. In terms of assembly, acetyl-CoA carboxylase is a heterohexamer composed of biotin carboxyl carrier protein (AccB), biotin carboxylase (AccC) and two subunits each of ACCase subunit alpha (AccA) and ACCase subunit beta (AccD).

It localises to the cytoplasm. The catalysed reaction is N(6)-carboxybiotinyl-L-lysyl-[protein] + acetyl-CoA = N(6)-biotinyl-L-lysyl-[protein] + malonyl-CoA. The protein operates within lipid metabolism; malonyl-CoA biosynthesis; malonyl-CoA from acetyl-CoA: step 1/1. Its function is as follows. Component of the acetyl coenzyme A carboxylase (ACC) complex. First, biotin carboxylase catalyzes the carboxylation of biotin on its carrier protein (BCCP) and then the CO(2) group is transferred by the carboxyltransferase to acetyl-CoA to form malonyl-CoA. This Francisella philomiragia subsp. philomiragia (strain ATCC 25017 / CCUG 19701 / FSC 153 / O#319-036) protein is Acetyl-coenzyme A carboxylase carboxyl transferase subunit alpha.